The chain runs to 614 residues: Probable glycerol-3-phosphate dehydrogenase (614 aa).

Position 57–85 (57–85 (DLVVVGGGSTGAGCALDGATRGLKVALVD)) interacts with FAD. The disordered stretch occupies residues 595–614 (MECPEEKRHRGERRLPPQEK). Residues 598–614 (PEEKRHRGERRLPPQEK) show a composition bias toward basic and acidic residues.

The protein belongs to the FAD-dependent glycerol-3-phosphate dehydrogenase family. Requires FAD as cofactor.

It localises to the cytoplasm. It catalyses the reaction a quinone + sn-glycerol 3-phosphate = dihydroxyacetone phosphate + a quinol. Its pathway is polyol metabolism; glycerol degradation via glycerol kinase pathway; glycerone phosphate from sn-glycerol 3-phosphate (anaerobic route): step 1/1. In Encephalitozoon cuniculi (strain GB-M1) (Microsporidian parasite), this protein is Probable glycerol-3-phosphate dehydrogenase.